The chain runs to 361 residues: ETS translocation variant 3-like protein (361 aa).

The ETS DNA-binding region spans 39 to 120 (IQLWHFILEL…KGKRFTYKFN (82 aa)). Residues 178 to 201 (LTGQQTPRGPPETSGDKKGSSSSV) form a disordered region.

It belongs to the ETS family.

It is found in the nucleus. In terms of biological role, transcriptional regulator. The sequence is that of ETS translocation variant 3-like protein (ETV3L) from Homo sapiens (Human).